The sequence spans 495 residues: Internal alternative NAD(P)H-ubiquinone oxidoreductase A1, mitochondrial (495 aa).

A mitochondrion-targeting transit peptide spans 1–41 (MPWFKNLIKISKTITNQSSSYKSITPLASPLLAQFLQFTKQ). 61–91 (RIVVLGSGWAGCRLMKDIDTNIYDVVCVSPR) contacts FAD. An NAD(+)-binding site is contributed by 228–264 (LHCVVVGGGPTGVEFSGELSDFILKDVHQRYAHVKDY). Residues 486–495 (LVFGRDISRI) carry the Microbody targeting signal motif.

This sequence belongs to the NADH dehydrogenase family. FAD serves as cofactor.

It is found in the mitochondrion inner membrane. It localises to the peroxisome. The catalysed reaction is a quinone + NADH + H(+) = a quinol + NAD(+). It catalyses the reaction a ubiquinone + NADH + H(+) = a ubiquinol + NAD(+). In terms of biological role, alternative NADH-ubiquinone oxidoreductase which catalyzes the oxidation of mitochondrial NADH does not translocate protons across the inner mitochondrial membrane. This chain is Internal alternative NAD(P)H-ubiquinone oxidoreductase A1, mitochondrial (NDA1), found in Solanum tuberosum (Potato).